An 83-amino-acid polypeptide reads, in one-letter code: RNA-binding protein Hfq (83 aa).

Residues 9-69 enclose the Sm domain; that stretch reads DQLLNTARKE…ISTIIPAKPI (61 aa).

It belongs to the Hfq family. In terms of assembly, homohexamer.

In terms of biological role, RNA chaperone that binds small regulatory RNA (sRNAs) and mRNAs to facilitate mRNA translational regulation in response to envelope stress, environmental stress and changes in metabolite concentrations. Also binds with high specificity to tRNAs. The chain is RNA-binding protein Hfq from Leptospira biflexa serovar Patoc (strain Patoc 1 / Ames).